The sequence spans 618 residues: 1-deoxy-D-xylulose-5-phosphate synthase (618 aa).

Thiamine diphosphate-binding positions include His72 and 113–115; that span reads GHA. Asp144 serves as a coordination point for Mg(2+). Thiamine diphosphate contacts are provided by residues 145-146, Asn173, His284, and Glu359; that span reads GA. Asn173 serves as a coordination point for Mg(2+).

This sequence belongs to the transketolase family. DXPS subfamily. In terms of assembly, homodimer. The cofactor is Mg(2+). Requires thiamine diphosphate as cofactor.

The enzyme catalyses D-glyceraldehyde 3-phosphate + pyruvate + H(+) = 1-deoxy-D-xylulose 5-phosphate + CO2. The protein operates within metabolic intermediate biosynthesis; 1-deoxy-D-xylulose 5-phosphate biosynthesis; 1-deoxy-D-xylulose 5-phosphate from D-glyceraldehyde 3-phosphate and pyruvate: step 1/1. In terms of biological role, catalyzes the acyloin condensation reaction between C atoms 2 and 3 of pyruvate and glyceraldehyde 3-phosphate to yield 1-deoxy-D-xylulose-5-phosphate (DXP). The protein is 1-deoxy-D-xylulose-5-phosphate synthase of Dictyoglomus thermophilum (strain ATCC 35947 / DSM 3960 / H-6-12).